A 402-amino-acid chain; its full sequence is uncharacterized protein (402 aa).

The N-terminal stretch at 1–44 (MLEKNLLPEILLAIHMPLNKGLTRVKAIVIIIVVIIAVIAGVVG) is a signal peptide. A disordered region spans residues 53–79 (NSVTTSSSSTTTSSSLSSTSISSSTTN).

The protein belongs to the bacterial solute-binding protein 1 family. WtpA subfamily.

This is an uncharacterized protein from Saccharolobus solfataricus (strain ATCC 35092 / DSM 1617 / JCM 11322 / P2) (Sulfolobus solfataricus).